Consider the following 243-residue polypeptide: Uridylate kinase (243 aa).

Residue K15 to G18 participates in ATP binding. Residues G23–G28 are involved in allosteric activation by GTP. G57 provides a ligand contact to UMP. ATP-binding residues include G58 and R62. UMP-binding positions include D77 and T138–T145. ATP is bound by residues T165, F171, and D174.

It belongs to the UMP kinase family. As to quaternary structure, homohexamer.

It localises to the cytoplasm. It carries out the reaction UMP + ATP = UDP + ADP. Its pathway is pyrimidine metabolism; CTP biosynthesis via de novo pathway; UDP from UMP (UMPK route): step 1/1. With respect to regulation, allosterically activated by GTP. Inhibited by UTP. Its function is as follows. Catalyzes the reversible phosphorylation of UMP to UDP. The protein is Uridylate kinase of Aliivibrio fischeri (strain ATCC 700601 / ES114) (Vibrio fischeri).